The sequence spans 416 residues: UDP-N-acetylglucosamine 1-carboxyvinyltransferase (416 aa).

22–23 (KN) contributes to the phosphoenolpyruvate binding site. Residue arginine 91 participates in UDP-N-acetyl-alpha-D-glucosamine binding. The active-site Proton donor is the cysteine 115. Cysteine 115 carries the post-translational modification 2-(S-cysteinyl)pyruvic acid O-phosphothioketal. UDP-N-acetyl-alpha-D-glucosamine contacts are provided by residues 120-124 (RPIDL), aspartate 303, and isoleucine 325.

The protein belongs to the EPSP synthase family. MurA subfamily.

It is found in the cytoplasm. The catalysed reaction is phosphoenolpyruvate + UDP-N-acetyl-alpha-D-glucosamine = UDP-N-acetyl-3-O-(1-carboxyvinyl)-alpha-D-glucosamine + phosphate. It participates in cell wall biogenesis; peptidoglycan biosynthesis. In terms of biological role, cell wall formation. Adds enolpyruvyl to UDP-N-acetylglucosamine. The chain is UDP-N-acetylglucosamine 1-carboxyvinyltransferase from Lawsonia intracellularis (strain PHE/MN1-00).